The primary structure comprises 227 residues: Orotidine 5'-phosphate decarboxylase (227 aa).

Substrate-binding positions include Asp-8, Lys-30, 59–68, Thr-118, Arg-178, Gln-187, Gly-207, and Arg-208; that span reads DLKLYDIPYT. Catalysis depends on Lys-61, which acts as the Proton donor.

This sequence belongs to the OMP decarboxylase family. Type 1 subfamily. In terms of assembly, homodimer.

It catalyses the reaction orotidine 5'-phosphate + H(+) = UMP + CO2. It functions in the pathway pyrimidine metabolism; UMP biosynthesis via de novo pathway; UMP from orotate: step 2/2. Functionally, catalyzes the decarboxylation of orotidine 5'-monophosphate (OMP) to uridine 5'-monophosphate (UMP). This chain is Orotidine 5'-phosphate decarboxylase, found in Helicobacter pylori (strain J99 / ATCC 700824) (Campylobacter pylori J99).